The chain runs to 231 residues: Ribose-5-phosphate isomerase A (231 aa).

Residues 28–31, 83–86, and 96–99 contribute to the substrate site; these read TGST, DGAD, and KGGG. The Proton acceptor role is filled by Glu105. Residue Lys123 participates in substrate binding.

The protein belongs to the ribose 5-phosphate isomerase family. As to quaternary structure, homodimer.

The enzyme catalyses aldehydo-D-ribose 5-phosphate = D-ribulose 5-phosphate. Its pathway is carbohydrate degradation; pentose phosphate pathway; D-ribose 5-phosphate from D-ribulose 5-phosphate (non-oxidative stage): step 1/1. Its function is as follows. Catalyzes the reversible conversion of ribose-5-phosphate to ribulose 5-phosphate. This is Ribose-5-phosphate isomerase A from Sinorhizobium medicae (strain WSM419) (Ensifer medicae).